A 500-amino-acid polypeptide reads, in one-letter code: Probable cytosol aminopeptidase (500 aa).

Mn(2+)-binding residues include Lys264 and Asp269. The active site involves Lys276. 3 residues coordinate Mn(2+): Asp287, Asp346, and Glu348. Arg350 is a catalytic residue.

This sequence belongs to the peptidase M17 family. The cofactor is Mn(2+).

Its subcellular location is the cytoplasm. The enzyme catalyses Release of an N-terminal amino acid, Xaa-|-Yaa-, in which Xaa is preferably Leu, but may be other amino acids including Pro although not Arg or Lys, and Yaa may be Pro. Amino acid amides and methyl esters are also readily hydrolyzed, but rates on arylamides are exceedingly low.. It carries out the reaction Release of an N-terminal amino acid, preferentially leucine, but not glutamic or aspartic acids.. Functionally, presumably involved in the processing and regular turnover of intracellular proteins. Catalyzes the removal of unsubstituted N-terminal amino acids from various peptides. The protein is Probable cytosol aminopeptidase of Nitrobacter hamburgensis (strain DSM 10229 / NCIMB 13809 / X14).